We begin with the raw amino-acid sequence, 247 residues long: ATP synthase subunit a, chloroplastic (247 aa).

5 consecutive transmembrane segments (helical) span residues 38-58 (QVLI…IIAV), 95-115 (VPFI…GALL), 134-154 (INTT…AGLT), 199-219 (LVVV…VMFL), and 220-240 (GLFT…AYIG).

This sequence belongs to the ATPase A chain family. As to quaternary structure, F-type ATPases have 2 components, CF(1) - the catalytic core - and CF(0) - the membrane proton channel. CF(1) has five subunits: alpha(3), beta(3), gamma(1), delta(1), epsilon(1). CF(0) has four main subunits: a, b, b' and c.

The protein resides in the plastid. It localises to the chloroplast thylakoid membrane. Key component of the proton channel; it plays a direct role in the translocation of protons across the membrane. This chain is ATP synthase subunit a, chloroplastic, found in Ranunculus macranthus (Large buttercup).